The sequence spans 224 residues: Casparian strip membrane protein 1 (224 aa).

The disordered stretch occupies residues 1 to 22 (MSSGEPAAVSIPIHDHHGKAPA). The Cytoplasmic portion of the chain corresponds to 1-62 (MSSGEPAAVS…RGDHHRGSRC (62 aa)). A helical membrane pass occupies residues 63–83 (LAFLDFILRIAAFGPALAAAI). Residues 84–110 (STGTSDETLSVFTEFYQFRARFDDFPA) lie on the Extracellular side of the membrane. The chain crosses the membrane as a helical span at residues 111–131 (FLFFLVANAIVAGYLVLSLPF). Topologically, residues 132–145 (SAVLVIRPQTIGLR) are cytoplasmic. The helical transmembrane segment at 146-166 (LLLLVCDMIMAAMLTAAASAA) threads the bilayer. Residues 167 to 200 (AAIVDLAHNGNLRANWVAICMQFHGFCQRTSGSV) are Extracellular-facing. The helical transmembrane segment at 201–221 (VASFLTVVILMFLVILAACSI) threads the bilayer. The Cytoplasmic segment spans residues 222–224 (RKR).

Belongs to the Casparian strip membrane proteins (CASP) family. Homodimer and heterodimers.

The protein localises to the cell membrane. In terms of biological role, regulates membrane-cell wall junctions and localized cell wall deposition. Required for establishment of the Casparian strip membrane domain (CSD) and the subsequent formation of Casparian strips, a cell wall modification of the root endodermis that determines an apoplastic barrier between the intraorganismal apoplasm and the extraorganismal apoplasm and prevents lateral diffusion. This is Casparian strip membrane protein 1 from Oryza sativa subsp. indica (Rice).